We begin with the raw amino-acid sequence, 228 residues long: L-ribulose-5-phosphate 4-epimerase UlaF (228 aa).

Residues 26–27, 43–44, and 72–73 contribute to the substrate site; these read GN, SG, and SS. Asp-74, His-93, and His-95 together coordinate Zn(2+). Catalysis depends on Asp-118, which acts as the Proton donor/acceptor. His-167 serves as a coordination point for Zn(2+). The active-site Proton donor/acceptor is the Tyr-225.

The protein belongs to the aldolase class II family. AraD/FucA subfamily. The cofactor is Zn(2+).

The catalysed reaction is L-ribulose 5-phosphate = D-xylulose 5-phosphate. The protein operates within cofactor degradation; L-ascorbate degradation; D-xylulose 5-phosphate from L-ascorbate: step 4/4. In terms of biological role, catalyzes the isomerization of L-ribulose 5-phosphate to D-xylulose 5-phosphate. Is involved in the anaerobic L-ascorbate utilization. The chain is L-ribulose-5-phosphate 4-epimerase UlaF from Escherichia coli O7:K1 (strain IAI39 / ExPEC).